The sequence spans 439 residues: tRNA modification GTPase MnmE (439 aa).

(6S)-5-formyl-5,6,7,8-tetrahydrofolate is bound by residues Arg-20, Glu-78, and Lys-116. The region spanning 211–364 is the TrmE-type G domain; sequence GIYVAILGEP…LLSAIQKKVE (154 aa). GTP is bound by residues 221–226, 240–246, and 265–268; these read NSGKST, SEYAGTT, and DTAG. Mg(2+) contacts are provided by Ser-225 and Thr-246. Lys-439 is a (6S)-5-formyl-5,6,7,8-tetrahydrofolate binding site.

It belongs to the TRAFAC class TrmE-Era-EngA-EngB-Septin-like GTPase superfamily. TrmE GTPase family. As to quaternary structure, homodimer. Heterotetramer of two MnmE and two MnmG subunits. K(+) serves as cofactor.

The protein resides in the cytoplasm. Its function is as follows. Exhibits a very high intrinsic GTPase hydrolysis rate. Involved in the addition of a carboxymethylaminomethyl (cmnm) group at the wobble position (U34) of certain tRNAs, forming tRNA-cmnm(5)s(2)U34. This is tRNA modification GTPase MnmE from Ehrlichia ruminantium (strain Welgevonden).